We begin with the raw amino-acid sequence, 215 residues long: Cytochrome b6 (215 aa).

The chain crosses the membrane as a helical span at residues 32–52; the sequence is IFYCLGGITLTCFLVQVATGF. Residue C35 participates in heme c binding. Positions 86 and 100 each coordinate heme b. A run of 3 helical transmembrane segments spans residues 90-110, 116-136, and 186-206; these read ASMM…TGGF, LTWV…VTGY, and LHTF…FSMI. Heme b is bound by residues H187 and H202.

This sequence belongs to the cytochrome b family. PetB subfamily. The 4 large subunits of the cytochrome b6-f complex are cytochrome b6, subunit IV (17 kDa polypeptide, PetD), cytochrome f and the Rieske protein, while the 4 small subunits are PetG, PetL, PetM and PetN. The complex functions as a dimer. The cofactor is heme b. Heme c is required as a cofactor.

Its subcellular location is the plastid. It localises to the chloroplast thylakoid membrane. In terms of biological role, component of the cytochrome b6-f complex, which mediates electron transfer between photosystem II (PSII) and photosystem I (PSI), cyclic electron flow around PSI, and state transitions. The chain is Cytochrome b6 from Piper cenocladum (Ant piper).